A 99-amino-acid chain; its full sequence is Cytochrome c oxidase subunit 4 isoform 1, mitochondrial (99 aa).

Residues 1-73 (SVVKREDFSL…TFAEMNRGSN (73 aa)) are Mitochondrial matrix-facing. K4 carries the post-translational modification N6-acetyllysine; alternate. K4 carries the post-translational modification N6-succinyllysine; alternate. N6-acetyllysine is present on K28. Phosphoserine occurs at positions 31 and 33. An N6-acetyllysine; alternate modification is found at K35. Residue K35 is modified to N6-succinyllysine; alternate. Residue K42 is modified to N6-acetyllysine. A helical transmembrane segment spans residues 74–99 (EWKTVVGTATFFIGFTALIIMWQKRY).

This sequence belongs to the cytochrome c oxidase IV family. In terms of assembly, component of the cytochrome c oxidase (complex IV, CIV), a multisubunit enzyme composed of 14 subunits. The complex is composed of a catalytic core of 3 subunits MT-CO1, MT-CO2 and MT-CO3, encoded in the mitochondrial DNA, and 11 supernumerary subunits COX4I, COX5A, COX5B, COX6A, COX6B, COX6C, COX7A, COX7B, COX7C, COX8 and NDUFA4, which are encoded in the nuclear genome. The complex exists as a monomer or a dimer and forms supercomplexes (SCs) in the inner mitochondrial membrane with NADH-ubiquinone oxidoreductase (complex I, CI) and ubiquinol-cytochrome c oxidoreductase (cytochrome b-c1 complex, complex III, CIII), resulting in different assemblies (supercomplex SCI(1)III(2)IV(1) and megacomplex MCI(2)III(2)IV(2)). Interacts with PHB2; the interaction decreases in absence of SPHK2. Interacts with AFG1L. Interacts with ABCB7; this interaction allows the regulation of cellular iron homeostasis and cellular reactive oxygen species (ROS) levels in cardiomyocytes. Interacts with FLVCR2; this interaction occurs in the absence of heme and is disrupted upon heme binding. Interacts with IRGC.

It localises to the mitochondrion inner membrane. The protein operates within energy metabolism; oxidative phosphorylation. Functionally, component of the cytochrome c oxidase, the last enzyme in the mitochondrial electron transport chain which drives oxidative phosphorylation. The respiratory chain contains 3 multisubunit complexes succinate dehydrogenase (complex II, CII), ubiquinol-cytochrome c oxidoreductase (cytochrome b-c1 complex, complex III, CIII) and cytochrome c oxidase (complex IV, CIV), that cooperate to transfer electrons derived from NADH and succinate to molecular oxygen, creating an electrochemical gradient over the inner membrane that drives transmembrane transport and the ATP synthase. Cytochrome c oxidase is the component of the respiratory chain that catalyzes the reduction of oxygen to water. Electrons originating from reduced cytochrome c in the intermembrane space (IMS) are transferred via the dinuclear copper A center (CU(A)) of subunit 2 and heme A of subunit 1 to the active site in subunit 1, a binuclear center (BNC) formed by heme A3 and copper B (CU(B)). The BNC reduces molecular oxygen to 2 water molecules using 4 electrons from cytochrome c in the IMS and 4 protons from the mitochondrial matrix. The sequence is that of Cytochrome c oxidase subunit 4 isoform 1, mitochondrial (COX4I1) from Trachypithecus cristatus (Silvered leaf-monkey).